Reading from the N-terminus, the 534-residue chain is Putative fimbrium tip subunit Fim1C (534 aa).

The signal sequence occupies residues Met-1 to Gly-21. Cys-22 carries N-palmitoyl cysteine lipidation. Residue Cys-22 is the site of S-diacylglycerol cysteine attachment. A propeptide spanning residues Cys-22–Arg-54 is cleaved from the precursor.

The protein belongs to the bacteroidetes fimbrillin superfamily. Mfa-like family. In terms of assembly, may be part of the fimbrial tip.

The protein resides in the fimbrium. The protein localises to the cell outer membrane. Functionally, probably a component of the fimbrium tip. Fimbriae are filamentous appendages on the cell surface that mediate cell adhesion and biofilm formation. This chain is Putative fimbrium tip subunit Fim1C, found in Bacteroides ovatus (strain ATCC 8483 / DSM 1896 / JCM 5824 / BCRC 10623 / CCUG 4943 / NCTC 11153).